Reading from the N-terminus, the 2363-residue chain is Spectrin beta chain, non-erythrocytic 1 (2363 aa).

An N-acetylthreonine modification is found at Thr2. The actin-binding stretch occupies residues 2–275; it reads TTTVATDYDN…IITYVVTYYH (274 aa). 2 positions are modified to phosphoserine: Ile14 and Ser36. 2 Calponin-homology (CH) domains span residues 54–158 and 173–278; these read AVQK…LRFQ and KSAK…HYFS. Lys90 carries the post-translational modification N6-acetyllysine. Ser228 is modified (phosphoserine). Spectrin repeat units follow at residues 303 to 411, 423 to 525, 530 to 636, 639 to 742, 745 to 847, 850 to 952, 957 to 1060, 1063 to 1166, 1170 to 1259, 1276 to 1376, 1381 to 1482, 1486 to 1590, 1592 to 1696, 1698 to 1801, and 1805 to 1907; these read MIEK…LALR, LARR…QRLE, LQKI…RLEE, RLWK…RLEE, LLHQ…ALQD, ALYK…DALL, IQNY…SLGE, KLQQ…NLLS, AYQQ…RHRK, DLQK…AQRL, KAEL…HNLL, EIHQ…RLEE, HKAQ…KLDE, HRLF…TQIL, and YELH…RVRL. Ser817, Ser903, Ser1057, Ser1076, Ser1079, and Ser1237 each carry phosphoserine. Phosphoserine occurs at positions 1388, 1447, and 1557. The segment at 1563 to 2093 is interaction with ANK2; sequence IRQRLADLKQ…LLEVRRQQEE (531 aa). Position 1805 is a phosphotyrosine (Tyr1805). N6-acetyllysine is present on residues Lys1815, Lys1913, and Lys1989. 2 Spectrin repeats span residues 1914–2014 and 2018–2097; these read FRFF…EWLR and EVHQ…EERK. The segment at 2089–2193 is disordered; the sequence is RQQEEEERKR…AATLPARTLE (105 aa). Residues Ser2102, Ser2127, and Ser2137 each carry the phosphoserine modification. The span at 2115 to 2130 shows a compositional bias: polar residues; it reads SQQWDTSKGDQVSQNG. Residue Thr2146 is modified to Phosphothreonine. Ser2147 is modified (phosphoserine). Positions 2148–2176 are mediates interaction with CAMSAP1; sequence EMVNGAAEQRTSSKESSPVPSPTLDRKAK. Thr2158 bears the Phosphothreonine mark. Phosphoserine is present on residues Ser2159, Ser2160, Ser2163, Ser2164, and Ser2168. Thr2170 carries the post-translational modification Phosphothreonine. Phosphoserine is present on Ser2183. Thr2186 and Thr2194 each carry phosphothreonine. The PH domain maps to 2196 to 2306; the sequence is AAQMEGFLNR…WIQAISSAIS (111 aa). Residues 2308 to 2363 are disordered; the sequence is DKHDTSASTQSTPASSRAQTLPTSVVTITSESSPGKREKDKEKDKEKRFSLFGKKK. Phosphoserine is present on residues Ser2313 and Ser2318. The segment covering 2313–2327 has biased composition (low complexity); sequence SASTQSTPASSRAQT. Phosphothreonine is present on Thr2319. Residue Ser2323 is glycosylated (O-linked (GlcNAc) serine). Thr2327 is modified (phosphothreonine). Positions 2328–2340 are enriched in polar residues; it reads LPTSVVTITSESS. Phosphoserine occurs at positions 2339 and 2340. Residues 2341–2356 are compositionally biased toward basic and acidic residues; it reads PGKREKDKEKDKEKRF.

The protein belongs to the spectrin family. Interacts with ANK2. Interacts with CPNE4 (via VWFA domain). Like erythrocyte spectrin, the spectrin-like proteins are capable to form dimers which can further associate to tetramers. Interacts with CAMSAP1. Can form heterodimers with SPTAN1. In terms of tissue distribution, isoform 2 is present in brain, heart, kidney and liver (at protein level).

It is found in the cytoplasm. It localises to the cytoskeleton. The protein localises to the endomembrane system. The protein resides in the myofibril. Its subcellular location is the sarcomere. It is found in the m line. It localises to the cytosol. The protein localises to the cell membrane. Functionally, fodrin, which seems to be involved in secretion, interacts with calmodulin in a calcium-dependent manner and is thus candidate for the calcium-dependent movement of the cytoskeleton at the membrane. Plays a critical role in central nervous system development and function. This chain is Spectrin beta chain, non-erythrocytic 1 (Sptbn1), found in Mus musculus (Mouse).